A 540-amino-acid polypeptide reads, in one-letter code: Sterol 14-alpha demethylase (540 aa).

Residues P41–I61 form a helical membrane-spanning segment. C485 is a binding site for heme.

It belongs to the cytochrome P450 family. Heme serves as cofactor.

The protein resides in the membrane. The enzyme catalyses a 14alpha-methyl steroid + 3 reduced [NADPH--hemoprotein reductase] + 3 O2 = a Delta(14) steroid + formate + 3 oxidized [NADPH--hemoprotein reductase] + 4 H2O + 4 H(+). It catalyses the reaction a 14alpha-methyl steroid + reduced [NADPH--hemoprotein reductase] + O2 = a 14alpha-hydroxymethyl steroid + oxidized [NADPH--hemoprotein reductase] + H2O + H(+). The catalysed reaction is a 14alpha-hydroxymethyl steroid + reduced [NADPH--hemoprotein reductase] + O2 = a 14alpha-formyl steroid + oxidized [NADPH--hemoprotein reductase] + 2 H2O + H(+). It carries out the reaction a 14alpha-formyl steroid + reduced [NADPH--hemoprotein reductase] + O2 = a Delta(14) steroid + formate + oxidized [NADPH--hemoprotein reductase] + H2O + 2 H(+). The enzyme catalyses lanosterol + 3 reduced [NADPH--hemoprotein reductase] + 3 O2 = 4,4-dimethyl-5alpha-cholesta-8,14,24-trien-3beta-ol + formate + 3 oxidized [NADPH--hemoprotein reductase] + 4 H2O + 4 H(+). It catalyses the reaction lanosterol + reduced [NADPH--hemoprotein reductase] + O2 = 32-hydroxylanosterol + oxidized [NADPH--hemoprotein reductase] + H2O + H(+). The catalysed reaction is 32-hydroxylanosterol + reduced [NADPH--hemoprotein reductase] + O2 = 32-oxolanosterol + oxidized [NADPH--hemoprotein reductase] + 2 H2O + H(+). It carries out the reaction 32-oxolanosterol + reduced [NADPH--hemoprotein reductase] + O2 = 4,4-dimethyl-5alpha-cholesta-8,14,24-trien-3beta-ol + formate + oxidized [NADPH--hemoprotein reductase] + H2O + 2 H(+). The enzyme catalyses eburicol + 3 reduced [NADPH--hemoprotein reductase] + 3 O2 = 14-demethyleburicol + formate + 3 oxidized [NADPH--hemoprotein reductase] + 4 H2O + 4 H(+). It catalyses the reaction eburicol + reduced [NADPH--hemoprotein reductase] + O2 = 32-hydroxyeburicol + oxidized [NADPH--hemoprotein reductase] + H2O + H(+). The catalysed reaction is 32-hydroxyeburicol + reduced [NADPH--hemoprotein reductase] + O2 = 32-oxoeburicol + oxidized [NADPH--hemoprotein reductase] + 2 H2O + H(+). It carries out the reaction 32-oxoeburicol + reduced [NADPH--hemoprotein reductase] + O2 = 14-demethyleburicol + formate + oxidized [NADPH--hemoprotein reductase] + H2O + 2 H(+). It functions in the pathway steroid biosynthesis; sterol biosynthesis. Sterol 14-alpha demethylase; part of the gene cluster that mediates the biosynthesis of tetrahydropyranyl antifungal agent lanomycin that acts as an inhibitor of CYP51 and blocks the ergosterol biosynthesis. Sterol 14-alpha-demethylase plays a critical role in the biosynthesis of ergosterol, the major sterol component in fungal membranes that participates in a variety of functions. Acts as a self-resistant CYP51 that contains mutations found in CYP51s isolated from azole resistance strains and that is not inhibited by the final product of the cluster, lanomycin. This chain is Sterol 14-alpha demethylase, found in Pyrenophora dematioidea (Helminthosporium dematioideum).